Reading from the N-terminus, the 235-residue chain is uncharacterized protein (235 aa).

The segment at 1–98 (MDTKLSVTGA…NKKNTLHYSK (98 aa)) is disordered. Residues Lys-16 and Lys-35 each participate in a glycyl lysine isopeptide (Lys-Gly) (interchain with G-Cter in ubiquitin) cross-link. Over residues 38–50 (NGNKKRNKNRNRN) the composition is skewed to basic residues. Positions 51–60 (KKTETKEQNE) are enriched in basic and acidic residues.

This is an uncharacterized protein from Saccharomyces cerevisiae (strain ATCC 204508 / S288c) (Baker's yeast).